The chain runs to 416 residues: MAGPFSRLLSARPGLRLLALAGAGSLAAGFLLRPEPIRAASERRRQYPPSAEYPDLRKHNNCMASHLTPAVYARLCDKTTPTGWTLDQCIQTGVDNPGHPFIKTVGMVAGDEETYEVFAELFDPVIQERHNGYDPRTMKHTTDLDASKIRSGFFDERYVLSSRVRTGRSIRGLSLPPACTRAERREVERVVVDALSGLKGDLAGRYYRLSEMTEAEQQQLIDDHFLFDKPVSPLLTAAGMARDWPDARGIWHNNEKSFLIWVNEEDHTRVISMEKGGNMKKVFERFCRGLKEVERLIQERGWEFMWNERLGYILTCPSNLGTGLRAGVHIKLPLLSKDSRFPKILENLRLQKRGTGGVDTAATGSIFDISNLDRLGKSEVELVQLVIDGVNYLIDCERRLERGQDIRIPPPLPNKH.

The N-terminal 39 residues, 1 to 39 (MAGPFSRLLSARPGLRLLALAGAGSLAAGFLLRPEPIRA), are a transit peptide targeting the mitochondrion. The interval 40–63 (ASERRRQYPPSAEYPDLRKHNNCM) is cardiolipin-binding. Positions 44–131 (RRQYPPSAEY…FDPVIQERHN (88 aa)) constitute a Phosphagen kinase N-terminal domain. Phosphoserine is present on serine 151. Residues 158–400 (YVLSSRVRTG…NYLIDCERRL (243 aa)) enclose the Phosphagen kinase C-terminal domain. An ATP-binding site is contributed by 161 to 165 (SSRVR). Phosphoserine is present on serine 196. At threonine 213 the chain carries Phosphothreonine. Histidine 224 lines the ATP pocket. Serine 232 is subject to Phosphoserine. ATP is bound by residues arginine 269, arginine 325, and 353–358 (RGTGGV). Threonine 355 carries the phosphothreonine modification. Serine 365 carries the phosphoserine modification. Residue aspartate 368 coordinates ATP.

This sequence belongs to the ATP:guanido phosphotransferase family. As to quaternary structure, exists as an octamer composed of four MTCK homodimers.

It localises to the mitochondrion inner membrane. The enzyme catalyses creatine + ATP = N-phosphocreatine + ADP + H(+). In terms of biological role, reversibly catalyzes the transfer of phosphate between ATP and various phosphogens (e.g. creatine phosphate). Creatine kinase isoenzymes play a central role in energy transduction in tissues with large, fluctuating energy demands, such as skeletal muscle, heart, brain and spermatozoa. This is Creatine kinase U-type, mitochondrial (CKMT1) from Sus scrofa (Pig).